Here is a 285-residue protein sequence, read N- to C-terminus: Energy-coupling factor transporter ATP-binding protein EcfA3 (285 aa).

The 237-residue stretch at 6 to 242 (LKVEELNYNY…KEVIRKVNLR (237 aa)) folds into the ABC transporter domain. An ATP-binding site is contributed by 39-46 (GGNGVGKS).

The protein belongs to the ABC transporter superfamily. Energy-coupling factor EcfA family. In terms of assembly, forms a stable energy-coupling factor (ECF) transporter complex composed of 2 membrane-embedded substrate-binding proteins (S component), 2 ATP-binding proteins (A component) and 2 transmembrane proteins (T component).

It is found in the cell membrane. In terms of biological role, ATP-binding (A) component of a common energy-coupling factor (ECF) ABC-transporter complex. Unlike classic ABC transporters this ECF transporter provides the energy necessary to transport a number of different substrates. This chain is Energy-coupling factor transporter ATP-binding protein EcfA3, found in Clostridium perfringens (strain ATCC 13124 / DSM 756 / JCM 1290 / NCIMB 6125 / NCTC 8237 / Type A).